Reading from the N-terminus, the 327-residue chain is Aspartate--ammonia ligase (327 aa).

This sequence belongs to the class-II aminoacyl-tRNA synthetase family. AsnA subfamily.

Its subcellular location is the cytoplasm. It catalyses the reaction L-aspartate + NH4(+) + ATP = L-asparagine + AMP + diphosphate + H(+). The protein operates within amino-acid biosynthesis; L-asparagine biosynthesis; L-asparagine from L-aspartate (ammonia route): step 1/1. This chain is Aspartate--ammonia ligase, found in Bacillus mycoides (strain KBAB4) (Bacillus weihenstephanensis).